A 602-amino-acid chain; its full sequence is Aspartate--tRNA(Asp/Asn) ligase (602 aa).

E176 serves as a coordination point for L-aspartate. The segment at 200-203 is aspartate; it reads QQFK. Positions 222 and 452 each coordinate L-aspartate. 222–224 is an ATP binding site; it reads RDE. Residue E490 coordinates ATP. R497 is a binding site for L-aspartate. 542-545 is a binding site for ATP; sequence GIDR.

Belongs to the class-II aminoacyl-tRNA synthetase family. Type 1 subfamily. Homodimer.

Its subcellular location is the cytoplasm. The enzyme catalyses tRNA(Asx) + L-aspartate + ATP = L-aspartyl-tRNA(Asx) + AMP + diphosphate. In terms of biological role, aspartyl-tRNA synthetase with relaxed tRNA specificity since it is able to aspartylate not only its cognate tRNA(Asp) but also tRNA(Asn). Reaction proceeds in two steps: L-aspartate is first activated by ATP to form Asp-AMP and then transferred to the acceptor end of tRNA(Asp/Asn). The polypeptide is Aspartate--tRNA(Asp/Asn) ligase (Rickettsia bellii (strain OSU 85-389)).